The primary structure comprises 427 residues: Peptidase B (427 aa).

Residues Lys-195 and Asp-200 each contribute to the Mn(2+) site. The active site involves Lys-207. Residues Asp-218, Asp-277, and Glu-279 each coordinate Mn(2+). Arg-281 is an active-site residue.

The protein belongs to the peptidase M17 family. In terms of assembly, homohexamer. Mn(2+) is required as a cofactor.

It localises to the cytoplasm. The enzyme catalyses Release of an N-terminal amino acid, Xaa, from a peptide or arylamide. Xaa is preferably Glu or Asp but may be other amino acids, including Leu, Met, His, Cys and Gln.. Probably plays an important role in intracellular peptide degradation. This is Peptidase B from Escherichia coli O157:H7.